The following is a 215-amino-acid chain: Thiamine-phosphate synthase (215 aa).

Residues 37-41 and N69 each bind 4-amino-2-methyl-5-(diphosphooxymethyl)pyrimidine; that span reads QLRIK. Positions 70 and 89 each coordinate Mg(2+). Position 108 (S108) interacts with 4-amino-2-methyl-5-(diphosphooxymethyl)pyrimidine. Residue 134-136 participates in 2-[(2R,5Z)-2-carboxy-4-methylthiazol-5(2H)-ylidene]ethyl phosphate binding; sequence TQT. K137 is a 4-amino-2-methyl-5-(diphosphooxymethyl)pyrimidine binding site. 2-[(2R,5Z)-2-carboxy-4-methylthiazol-5(2H)-ylidene]ethyl phosphate contacts are provided by residues G166 and 186-187; that span reads VS.

This sequence belongs to the thiamine-phosphate synthase family. Mg(2+) is required as a cofactor.

The enzyme catalyses 2-[(2R,5Z)-2-carboxy-4-methylthiazol-5(2H)-ylidene]ethyl phosphate + 4-amino-2-methyl-5-(diphosphooxymethyl)pyrimidine + 2 H(+) = thiamine phosphate + CO2 + diphosphate. It carries out the reaction 2-(2-carboxy-4-methylthiazol-5-yl)ethyl phosphate + 4-amino-2-methyl-5-(diphosphooxymethyl)pyrimidine + 2 H(+) = thiamine phosphate + CO2 + diphosphate. The catalysed reaction is 4-methyl-5-(2-phosphooxyethyl)-thiazole + 4-amino-2-methyl-5-(diphosphooxymethyl)pyrimidine + H(+) = thiamine phosphate + diphosphate. It functions in the pathway cofactor biosynthesis; thiamine diphosphate biosynthesis; thiamine phosphate from 4-amino-2-methyl-5-diphosphomethylpyrimidine and 4-methyl-5-(2-phosphoethyl)-thiazole: step 1/1. Functionally, condenses 4-methyl-5-(beta-hydroxyethyl)thiazole monophosphate (THZ-P) and 2-methyl-4-amino-5-hydroxymethyl pyrimidine pyrophosphate (HMP-PP) to form thiamine monophosphate (TMP). This Yersinia pseudotuberculosis serotype I (strain IP32953) protein is Thiamine-phosphate synthase.